The primary structure comprises 316 residues: Ribose-phosphate pyrophosphokinase (316 aa).

Residues 39–41 (DGE) and 98–99 (RQ) contribute to the ATP site. Mg(2+) is bound by residues histidine 133 and aspartate 172. Lysine 195 is a catalytic residue. Residues arginine 197, aspartate 221, and 225–229 (DTGGT) contribute to the D-ribose 5-phosphate site.

It belongs to the ribose-phosphate pyrophosphokinase family. Class I subfamily. In terms of assembly, homohexamer. Mg(2+) serves as cofactor.

The protein localises to the cytoplasm. It carries out the reaction D-ribose 5-phosphate + ATP = 5-phospho-alpha-D-ribose 1-diphosphate + AMP + H(+). The protein operates within metabolic intermediate biosynthesis; 5-phospho-alpha-D-ribose 1-diphosphate biosynthesis; 5-phospho-alpha-D-ribose 1-diphosphate from D-ribose 5-phosphate (route I): step 1/1. In terms of biological role, involved in the biosynthesis of the central metabolite phospho-alpha-D-ribosyl-1-pyrophosphate (PRPP) via the transfer of pyrophosphoryl group from ATP to 1-hydroxyl of ribose-5-phosphate (Rib-5-P). This chain is Ribose-phosphate pyrophosphokinase, found in Ralstonia nicotianae (strain ATCC BAA-1114 / GMI1000) (Ralstonia solanacearum).